The following is a 185-amino-acid chain: Intraflagellar transport protein 22 homolog (185 aa).

Residues 10–17 (GPCESGKT), 63–67 (DCGGD), and 123–126 (HKPG) each bind GTP. Phosphoserine is present on S137.

This sequence belongs to the small GTPase superfamily. Rab family. As to quaternary structure, component of the IFT complex B, at least composed of IFT20, IFT22, IFT25, IFT27, IFT46, IFT52, TRAF3IP1/IFT54, IFT57, IFT74, IFT80, IFT81, and IFT88. Interacts with IFT88. Interacts with CFAP61.

It is found in the cell projection. The protein localises to the cilium. Its function is as follows. Small GTPase-like component of the intraflagellar transport (IFT) complex B. The sequence is that of Intraflagellar transport protein 22 homolog (IFT22) from Macaca fascicularis (Crab-eating macaque).